Consider the following 469-residue polypeptide: 6-phospho-beta-galactosidase (469 aa).

The D-galactose 6-phosphate site is built by Q19, H116, N159, E160, and N297. The active-site Proton donor is the E160. E375 serves as the catalytic Nucleophile. D-galactose 6-phosphate-binding residues include S428, W429, K435, and Y437.

Belongs to the glycosyl hydrolase 1 family.

It carries out the reaction a 6-phospho-beta-D-galactoside + H2O = D-galactose 6-phosphate + an alcohol. It participates in carbohydrate metabolism; lactose degradation; D-galactose 6-phosphate and beta-D-glucose from lactose 6-phosphate: step 1/1. In Streptococcus equi subsp. zooepidemicus (strain MGCS10565), this protein is 6-phospho-beta-galactosidase.